The primary structure comprises 123 residues: Large ribosomal subunit protein bL20 (123 aa).

Belongs to the bacterial ribosomal protein bL20 family.

Binds directly to 23S ribosomal RNA and is necessary for the in vitro assembly process of the 50S ribosomal subunit. It is not involved in the protein synthesizing functions of that subunit. In Chlamydia muridarum (strain MoPn / Nigg), this protein is Large ribosomal subunit protein bL20 (rplT).